The chain runs to 433 residues: Histidinol dehydrogenase (433 aa).

NAD(+) contacts are provided by Tyr-133, Gln-194, and Asn-217. Substrate is bound by residues Ser-240, Gln-262, and His-265. Zn(2+) is bound by residues Gln-262 and His-265. Active-site proton acceptor residues include Glu-330 and His-331. The substrate site is built by His-331, Asp-364, Glu-418, and His-423. A Zn(2+)-binding site is contributed by Asp-364. His-423 provides a ligand contact to Zn(2+).

This sequence belongs to the histidinol dehydrogenase family. Zn(2+) is required as a cofactor.

It carries out the reaction L-histidinol + 2 NAD(+) + H2O = L-histidine + 2 NADH + 3 H(+). It participates in amino-acid biosynthesis; L-histidine biosynthesis; L-histidine from 5-phospho-alpha-D-ribose 1-diphosphate: step 9/9. Its function is as follows. Catalyzes the sequential NAD-dependent oxidations of L-histidinol to L-histidinaldehyde and then to L-histidine. This chain is Histidinol dehydrogenase, found in Hydrogenovibrio crunogenus (strain DSM 25203 / XCL-2) (Thiomicrospira crunogena).